The primary structure comprises 78 residues: Small venom protein 2 (78 aa).

A signal peptide spans 1 to 19; the sequence is MKFIVLLGALLALLVAVSA. The propeptide occupies 20–42; it reads DRIAREAPEMESVDEAVLTRQAR.

In terms of tissue distribution, expressed by the venom gland.

It is found in the secreted. The sequence is that of Small venom protein 2 from Pimpla hypochondriaca (Parasitoid wasp).